Reading from the N-terminus, the 121-residue chain is Small ribosomal subunit protein uS13 (121 aa).

Positions 95–121 (LPMRGQRTRTNARTRKGPRKAAASLKK) are disordered.

It belongs to the universal ribosomal protein uS13 family. Part of the 30S ribosomal subunit. Forms a loose heterodimer with protein S19. Forms two bridges to the 50S subunit in the 70S ribosome.

Functionally, located at the top of the head of the 30S subunit, it contacts several helices of the 16S rRNA. In the 70S ribosome it contacts the 23S rRNA (bridge B1a) and protein L5 of the 50S subunit (bridge B1b), connecting the 2 subunits; these bridges are implicated in subunit movement. Contacts the tRNAs in the A and P-sites. The chain is Small ribosomal subunit protein uS13 from Polaromonas naphthalenivorans (strain CJ2).